The sequence spans 573 residues: Urease subunit alpha (573 aa).

The region spanning 136 to 573 is the Urease domain; that stretch reads GGIDCHVHFI…LPMAQRYFLF (438 aa). 3 residues coordinate Ni(2+): histidine 141, histidine 143, and lysine 224. Lysine 224 is modified (N6-carboxylysine). Substrate is bound at residue histidine 226. Positions 253 and 279 each coordinate Ni(2+). Catalysis depends on histidine 327, which acts as the Proton donor. Aspartate 367 provides a ligand contact to Ni(2+).

Belongs to the metallo-dependent hydrolases superfamily. Urease alpha subunit family. As to quaternary structure, heterotrimer of UreA (gamma), UreB (beta) and UreC (alpha) subunits. Three heterotrimers associate to form the active enzyme. The cofactor is Ni cation. Carboxylation allows a single lysine to coordinate two nickel ions.

The protein resides in the cytoplasm. The enzyme catalyses urea + 2 H2O + H(+) = hydrogencarbonate + 2 NH4(+). The protein operates within nitrogen metabolism; urea degradation; CO(2) and NH(3) from urea (urease route): step 1/1. This is Urease subunit alpha from Rhodococcus opacus (strain B4).